The sequence spans 449 residues: Na(+)/H(+) antiporter NhaA (449 aa).

The next 12 helical transmembrane spans lie at 30–50 (IFLI…WAGA), 69–89 (FGLT…FLVA), 112–132 (LLAA…LNLG), 138–158 (GWGI…GLLG), 168–188 (FLIA…ALFY), 192–212 (LSWI…LMNW), 218–238 (LIWY…SGIH), 241–261 (IAGV…SKIL), 312–332 (SLVD…NAGV), 348–368 (LGIL…FTLI), 386–406 (IIGI…ITNL), and 419–439 (ISIL…LLLT).

The protein belongs to the NhaA Na(+)/H(+) (TC 2.A.33) antiporter family.

It is found in the cell inner membrane. It catalyses the reaction Na(+)(in) + 2 H(+)(out) = Na(+)(out) + 2 H(+)(in). Na(+)/H(+) antiporter that extrudes sodium in exchange for external protons. This Christiangramia forsetii (strain DSM 17595 / CGMCC 1.15422 / KT0803) (Gramella forsetii) protein is Na(+)/H(+) antiporter NhaA.